A 107-amino-acid chain; its full sequence is Metallothionein-1 (107 aa).

Positions 1 to 2 (MD) are excised as a propeptide.

The protein belongs to the metallothionein superfamily. Type 7 family.

Its function is as follows. The metallothioneins are involved in the cellular sequestration of toxic metal ions. Binds 12 cadmium ions per molecule. This Tetrahymena pyriformis protein is Metallothionein-1.